The chain runs to 352 residues: Transcriptional regulatory protein AlgP (352 aa).

Residues 128–352 (KALESRKAKP…SNGAAPTSAS (225 aa)) form a disordered region. Positions 138 to 341 (ATKPAAKAAA…SSAASATPAA (204 aa)) are enriched in low complexity.

In terms of biological role, the promoter for a critical alginate biosynthetic gene, AlgD, encoding GDP-mannose dehydrogenase, is activated only under conditions reminiscent of the cystic fibrosis lung (i.e. under high osmolarity), and at least two regulatory genes, AlgP and AlgQ, have been implicated in this activation process. This Pseudomonas aeruginosa (strain ATCC 15692 / DSM 22644 / CIP 104116 / JCM 14847 / LMG 12228 / 1C / PRS 101 / PAO1) protein is Transcriptional regulatory protein AlgP (algP).